A 70-amino-acid chain; its full sequence is ATP synthase subunit c (70 aa).

The next 2 membrane-spanning stretches (helical) occupy residues 1 to 21 (MNFLAAAIAAGLAAFAASYGN) and 47 to 67 (FIGVGLIEAVPILSIVVSFLI).

It belongs to the ATPase C chain family. In terms of assembly, F-type ATPases have 2 components, F(1) - the catalytic core - and F(0) - the membrane proton channel. F(1) has five subunits: alpha(3), beta(3), gamma(1), delta(1), epsilon(1). F(0) has three main subunits: a(1), b(2) and c(10-14). The alpha and beta chains form an alternating ring which encloses part of the gamma chain. F(1) is attached to F(0) by a central stalk formed by the gamma and epsilon chains, while a peripheral stalk is formed by the delta and b chains.

The protein resides in the cell membrane. Functionally, f(1)F(0) ATP synthase produces ATP from ADP in the presence of a proton or sodium gradient. F-type ATPases consist of two structural domains, F(1) containing the extramembraneous catalytic core and F(0) containing the membrane proton channel, linked together by a central stalk and a peripheral stalk. During catalysis, ATP synthesis in the catalytic domain of F(1) is coupled via a rotary mechanism of the central stalk subunits to proton translocation. In terms of biological role, key component of the F(0) channel; it plays a direct role in translocation across the membrane. A homomeric c-ring of between 10-14 subunits forms the central stalk rotor element with the F(1) delta and epsilon subunits. This Latilactobacillus sakei subsp. sakei (strain 23K) (Lactobacillus sakei subsp. sakei) protein is ATP synthase subunit c.